A 348-amino-acid polypeptide reads, in one-letter code: Photosystem II protein D1 (348 aa).

Transmembrane regions (helical) follow at residues 33 to 50 (YIGWFGILMFPLLVLATV), 122 to 137 (HFIFGAGAYMGREWEF), and 146 to 160 (WIFVAFSAPLVAASA). His122 contributes to the chlorophyll a binding site. Residue Tyr130 participates in pheophytin a binding. Residues Asp174 and Glu193 each contribute to the [CaMn4O5] cluster site. The helical transmembrane segment at 201-222 (FHILGVAAVFGGSLFSAMHGSL) threads the bilayer. His202 contacts chlorophyll a. A quinone is bound by residues His219 and 268 to 269 (SF). A Fe cation-binding site is contributed by His219. His276 provides a ligand contact to Fe cation. Residues 278-292 (FLAAWPVIGIWFTSL) traverse the membrane as a helical segment. Residues His336, Glu337, Asp346, and Ala348 each coordinate [CaMn4O5] cluster.

The protein belongs to the reaction center PufL/M/PsbA/D family. PSII is composed of 1 copy each of membrane proteins PsbA, PsbB, PsbC, PsbD, PsbE, PsbF, PsbH, PsbI, PsbJ, PsbK, PsbL, PsbM, PsbT, PsbX, PsbY, PsbZ, Psb30/Ycf12, at least 3 peripheral proteins of the oxygen-evolving complex and a large number of cofactors. It forms dimeric complexes. The D1/D2 heterodimer binds P680, chlorophylls that are the primary electron donor of PSII, and subsequent electron acceptors. It shares a non-heme iron and each subunit binds pheophytin, quinone, additional chlorophylls, carotenoids and lipids. D1 provides most of the ligands for the Mn4-Ca-O5 cluster of the oxygen-evolving complex (OEC). There is also a Cl(-1) ion associated with D1 and D2, which is required for oxygen evolution. The PSII complex binds additional chlorophylls, carotenoids and specific lipids. is required as a cofactor. Tyr-165 forms a radical intermediate that is referred to as redox-active TyrZ, YZ or Y-Z.

It is found in the plastid. Its subcellular location is the chloroplast thylakoid membrane. It carries out the reaction 2 a plastoquinone + 4 hnu + 2 H2O = 2 a plastoquinol + O2. Its function is as follows. Photosystem II (PSII) is a light-driven water:plastoquinone oxidoreductase that uses light energy to abstract electrons from H(2)O, generating O(2) and a proton gradient subsequently used for ATP formation. It consists of a core antenna complex that captures photons, and an electron transfer chain that converts photonic excitation into a charge separation. The D1/D2 (PsbA/PsbD) reaction center heterodimer binds P680, the primary electron donor of PSII as well as several subsequent electron acceptors. The protein is Photosystem II protein D1 of Heterocapsa triquetra (Dinoflagellate).